A 583-amino-acid polypeptide reads, in one-letter code: Aspartate--tRNA ligase (583 aa).

An L-aspartate-binding site is contributed by E173. The segment at Q197–K200 is aspartate. An L-aspartate-binding site is contributed by R219. Residues R219–E221 and Q228 each bind ATP. H444 serves as a coordination point for L-aspartate. E478 contacts ATP. R485 provides a ligand contact to L-aspartate. G530–R533 contacts ATP.

This sequence belongs to the class-II aminoacyl-tRNA synthetase family. Type 1 subfamily. In terms of assembly, homodimer.

It is found in the cytoplasm. It catalyses the reaction tRNA(Asp) + L-aspartate + ATP = L-aspartyl-tRNA(Asp) + AMP + diphosphate. Catalyzes the attachment of L-aspartate to tRNA(Asp) in a two-step reaction: L-aspartate is first activated by ATP to form Asp-AMP and then transferred to the acceptor end of tRNA(Asp). In Azobacteroides pseudotrichonymphae genomovar. CFP2, this protein is Aspartate--tRNA ligase.